The chain runs to 168 residues: MSAVAEPQPSVALHPDIAALAPLLGTWRGAGHGQYPTIESFDYHEEISFGHLGRPFLTYRQRTRAADGSRPMHAETGYLRRPRPDHVELILAHPTGITEICEGSLTIADGELRMDFDSTHIGRSSTAKLVTALGRSFRVAGDTIEYSLRMAAVGEPLTHHLAATLRRD.

The GXWXGXG signature appears at 25 to 31; the sequence is GTWRGAG. His160 is a heme b binding site.

The protein belongs to the nitrobindin family. As to quaternary structure, homodimer. Heme b is required as a cofactor.

The enzyme catalyses peroxynitrite = nitrate. It functions in the pathway nitrogen metabolism. Its function is as follows. Heme-binding protein able to scavenge peroxynitrite and to protect free L-tyrosine against peroxynitrite-mediated nitration, by acting as a peroxynitrite isomerase that converts peroxynitrite to nitrate. Therefore, this protein likely plays a role in peroxynitrite sensing and in the detoxification of reactive nitrogen and oxygen species (RNS and ROS, respectively). Is able to bind nitric oxide (NO) in vitro, but may act as a sensor of peroxynitrite levels in vivo. This Nocardia farcinica (strain IFM 10152) protein is Peroxynitrite isomerase.